The chain runs to 390 residues: MVEADRPGKLFIGGLNTETNEKALEAVFGKYGRIVEVLLMKDRETNKSRGFAFVTFESPADAKDAARDMNGKSLDGKAIKVEQATKPSFESGRRGLPPPPRSRGPPRGLRGGRGGSGGTRGPPSRGGHMDDGGYSMNFTLSSSRGPLPVKRGPPPRSGGPPPKRSAPSGPVRSSSGMGGRAPVSRGRDGYGGPPRREPLPSRRDVYLSPRDDGYSTKDSYSSRDYPSSRDTRDYAPPPRDYTYRDYGHSSSRDDYPSRGYSDRDGYGRERDYSDHPSGGSYRDSYESYGNSRSAPPTRGPPPSYGGSSRYDDYSSSRDGYGGSRDSYTSSRSDLYSSGRDRVGRQERGLPPSMERGYPPPRDSYSSSSRGAPRGGGRGGSRSDRGGRSRY.

Methionine 1 carries the post-translational modification N-acetylmethionine; in Heterogeneous nuclear ribonucleoprotein G; alternate. Residue valine 2 is modified to N-acetylvaline; in Heterogeneous nuclear ribonucleoprotein G, N-terminally processed. The 79-residue stretch at 8–86 folds into the RRM domain; the sequence is GKLFIGGLNT…KAIKVEQATK (79 aa). Lysine 22 is covalently cross-linked (Glycyl lysine isopeptide (Lys-Gly) (interchain with G-Cter in SUMO2)). Lysine 30 carries the post-translational modification N6-acetyllysine. Positions 58-390 are disordered; it reads SPADAKDAAR…RSDRGGRSRY (333 aa). Basic and acidic residues predominate over residues 60–80; it reads ADAKDAARDMNGKSLDGKAIK. Residues lysine 80 and lysine 86 each participate in a glycyl lysine isopeptide (Lys-Gly) (interchain with G-Cter in SUMO2) cross-link. A phosphoserine mark is found at serine 88 and serine 91. The span at 109-120 shows a compositional bias: gly residues; that stretch reads LRGGRGGSGGTR. An omega-N-methylarginine mark is found at arginine 125, arginine 144, and arginine 164. Residues 151–164 show a composition bias toward pro residues; the sequence is RGPPPRSGGPPPKR. Serine 165 is modified (phosphoserine). Arginine 172 carries the omega-N-methylarginine modification. Serine 174 bears the Phosphoserine mark. Basic and acidic residues-rich tracts occupy residues 194 to 215 and 241 to 274; these read PRRE…DGYS and YTYR…DYSD. Phosphoserine occurs at positions 261, 329, 330, and 332. Over residues 323-337 the composition is skewed to low complexity; the sequence is SRDSYTSSRSDLYSS. The span at 338–347 shows a compositional bias: basic and acidic residues; that stretch reads GRDRVGRQER. At serine 352 the chain carries Phosphoserine. The span at 362–371 shows a compositional bias: low complexity; that stretch reads DSYSSSSRGA. Residues 380–390 show a composition bias toward basic and acidic residues; it reads SRSDRGGRSRY.

In terms of assembly, homomultimer. Found in the supraspliceosome complex Identified in the spliceosome C complex. Interacts with KHDRBS3. Forms a complex with ILF2, ILF3, YLPM1, KHDRBS1, NCOA5 and PPP1CA. Interacts with SAFB/SAFB1. Interacts with ERAP1; the interaction is RNA-independent. Interacts with CLK2, KHDRBS2, SAFB, TRA2B and YTHDC1. Interacts with PPIA/CYPA. In terms of processing, O-glycosylated. Post-translationally, arg-182 is dimethylated, probably to asymmetric dimethylarginine. Expressed in brain, spleen, lung, liver, kidney, testis and heart. Weakly expressed in skeletal muscle (at protein level).

The protein localises to the nucleus. Functionally, RNA-binding protein that plays several role in the regulation of pre- and post-transcriptional processes. Implicated in tissue-specific regulation of gene transcription and alternative splicing of several pre-mRNAs. Binds to and stimulates transcription from the tumor suppressor TXNIP gene promoter; may thus be involved in tumor suppression. When associated with SAFB, binds to and stimulates transcription from the SREBF1 promoter. Associates with nascent mRNAs transcribed by RNA polymerase II. Component of the supraspliceosome complex that regulates pre-mRNA alternative splice site selection. Can either activate or suppress exon inclusion; acts additively with TRA2B to promote exon 7 inclusion of the survival motor neuron SMN. Represses the splicing of MAPT/Tau exon 10. Binds preferentially to single-stranded 5'-CC[A/C]-rich RNA sequence motifs localized in a single-stranded conformation; probably binds RNA as a homodimer. Binds non-specifically to pre-mRNAs. Also plays a role in the cytoplasmic TNFR1 trafficking pathways; promotes both the IL-1-beta-mediated inducible proteolytic cleavage of TNFR1 ectodomains and the release of TNFR1 exosome-like vesicles to the extracellular compartment. The chain is RNA-binding motif protein, X chromosome (Rbmx) from Rattus norvegicus (Rat).